Reading from the N-terminus, the 120-residue chain is MFYWILLALAIVAEITGTLSMKWASISDDNTGFILMLVMISLSYIFLSFAVKKIALGVAYALWEGIGILLITLFSVMLFDEALSTMKIAGLATLVVGIVLIKSGTRKPTKQPKEQAHATV.

The next 4 membrane-spanning stretches (helical) occupy residues M1 to M21, T31 to V51, I54 to F74, and E81 to I101.

The protein belongs to the drug/metabolite transporter (DMT) superfamily. Small multidrug resistance (SMR) (TC 2.A.7.1) family. MdtJ subfamily. Forms a complex with MdtI.

The protein localises to the cell inner membrane. Functionally, catalyzes the excretion of spermidine. This chain is Spermidine export protein MdtJ, found in Enterobacter sp. (strain 638).